Here is a 258-residue protein sequence, read N- to C-terminus: Chaperone protein FaeE (258 aa).

Positions 1–34 (MSKRNAVTTFFTNRVTKALGMTLALMMTCQSAMA) are cleaved as a signal peptide. The segment at 239-258 (KKPAAPEAAKAEKADTAEQK) is disordered. Basic and acidic residues predominate over residues 247–258 (AKAEKADTAEQK).

This sequence belongs to the periplasmic pilus chaperone family.

Its subcellular location is the periplasm. Mediates assembly of pili by forming soluble multimeric complexes with pili subunits as an intermediate step in the assembly process. This protein is involved in K88 pili assembly. Protects pilin protein from proteolytic degradation by DegP and from premature polymerization. The sequence is that of Chaperone protein FaeE (faeE) from Escherichia coli.